The sequence spans 282 residues: Phosphatidylserine decarboxylase proenzyme (282 aa).

Catalysis depends on charge relay system; for autoendoproteolytic cleavage activity residues Asp-88, His-144, and Ser-247. Ser-247 (schiff-base intermediate with substrate; via pyruvic acid; for decarboxylase activity) is an active-site residue. The residue at position 247 (Ser-247) is a Pyruvic acid (Ser); by autocatalysis.

It belongs to the phosphatidylserine decarboxylase family. PSD-B subfamily. Prokaryotic type I sub-subfamily. As to quaternary structure, heterodimer of a large membrane-associated beta subunit and a small pyruvoyl-containing alpha subunit. Pyruvate serves as cofactor. Is synthesized initially as an inactive proenzyme. Formation of the active enzyme involves a self-maturation process in which the active site pyruvoyl group is generated from an internal serine residue via an autocatalytic post-translational modification. Two non-identical subunits are generated from the proenzyme in this reaction, and the pyruvate is formed at the N-terminus of the alpha chain, which is derived from the carboxyl end of the proenzyme. The autoendoproteolytic cleavage occurs by a canonical serine protease mechanism, in which the side chain hydroxyl group of the serine supplies its oxygen atom to form the C-terminus of the beta chain, while the remainder of the serine residue undergoes an oxidative deamination to produce ammonia and the pyruvoyl prosthetic group on the alpha chain. During this reaction, the Ser that is part of the protease active site of the proenzyme becomes the pyruvoyl prosthetic group, which constitutes an essential element of the active site of the mature decarboxylase.

It localises to the cell membrane. It catalyses the reaction a 1,2-diacyl-sn-glycero-3-phospho-L-serine + H(+) = a 1,2-diacyl-sn-glycero-3-phosphoethanolamine + CO2. It functions in the pathway phospholipid metabolism; phosphatidylethanolamine biosynthesis; phosphatidylethanolamine from CDP-diacylglycerol: step 2/2. Its function is as follows. Catalyzes the formation of phosphatidylethanolamine (PtdEtn) from phosphatidylserine (PtdSer). In Xanthomonas campestris pv. campestris (strain 8004), this protein is Phosphatidylserine decarboxylase proenzyme.